A 435-amino-acid chain; its full sequence is Methylenetetrahydrofolate--tRNA-(uracil-5-)-methyltransferase TrmFO (435 aa).

Residue 7-12 (GAGLAG) coordinates FAD.

The protein belongs to the MnmG family. TrmFO subfamily. The cofactor is FAD.

Its subcellular location is the cytoplasm. It carries out the reaction uridine(54) in tRNA + (6R)-5,10-methylene-5,6,7,8-tetrahydrofolate + NADH + H(+) = 5-methyluridine(54) in tRNA + (6S)-5,6,7,8-tetrahydrofolate + NAD(+). The catalysed reaction is uridine(54) in tRNA + (6R)-5,10-methylene-5,6,7,8-tetrahydrofolate + NADPH + H(+) = 5-methyluridine(54) in tRNA + (6S)-5,6,7,8-tetrahydrofolate + NADP(+). Functionally, catalyzes the folate-dependent formation of 5-methyl-uridine at position 54 (M-5-U54) in all tRNAs. The polypeptide is Methylenetetrahydrofolate--tRNA-(uracil-5-)-methyltransferase TrmFO (Thermotoga neapolitana (strain ATCC 49049 / DSM 4359 / NBRC 107923 / NS-E)).